Consider the following 473-residue polypeptide: Cannabinoid receptor 1 (473 aa).

Residues 1 to 121 (MKSILDGLAD…LNPSQQLAIA (121 aa)) are Extracellular-facing. The interval 2–23 (KSILDGLADTTFRTITTDLLYV) is required for mitochondrial localization. Residues Asn78 and Asn84 are each glycosylated (N-linked (GlcNAc...) asparagine). A helical membrane pass occupies residues 122 to 142 (VLSLTLGTFTVLENLLVLCVI). At 143–155 (LHSRSLRCRPSYH) the chain is on the cytoplasmic side. Residues 156-176 (FIGSLAVADLLGSVIFVYSFV) traverse the membrane as a helical segment. Topologically, residues 177 to 188 (DFHVFHRKDSPN) are extracellular. Residues 189–209 (VFLFKLGGVTASFTASVGSLF) form a helical membrane-spanning segment. Over 210-233 (LTAIDRYISIHRPLAYKRIVTRPK) the chain is Cytoplasmic. A helical membrane pass occupies residues 234–254 (AVVAFCLMWTIAIVIAVLPLL). Over 255 to 278 (GWNCKKLQSVCSDIFPLIDETYLM) the chain is Extracellular. The helical transmembrane segment at 279–299 (FWIGVTSVLLLFIVYAYMYIL) threads the bilayer. Over 300–345 (WKAHSHAVRMIQRGTQKSIIIHTSEDGKVQVTRPDQARMDIRLAKT) the chain is Cytoplasmic. The chain crosses the membrane as a helical span at residues 346-366 (LVLILVVLIICWGPLLAIMVY). The Extracellular portion of the chain corresponds to 367–378 (DVFGKMNKLIKT). A helical membrane pass occupies residues 379 to 399 (VFAFCSMLCLLNSTVNPIIYA). Residues 400 to 473 (LRSKDLRHAF…VSTDTSAEAL (74 aa)) are Cytoplasmic-facing. Cys416 carries the S-palmitoyl cysteine lipid modification. Phosphoserine is present on residues Ser426 and Ser430.

This sequence belongs to the G-protein coupled receptor 1 family. As to quaternary structure, interacts (via C-terminus) with CNRIP1. Associates with G protein alpha subunits, including G(i) alpha-1/GNAI1, G(i) alpha-3/GNAI3 and G(o)-alpha/GNAO1; palmitoylation is important for interaction with GNAI3 and GNAO1. Palmitoylation at Cys-416 is important for recruitment at both plasma membrane and lipid rafts and association with G protein alpha subunits. In terms of tissue distribution, expressed in brain neurons (at protein level). Detected throughout the striatum, cortex and hippocampus, with highest levels in the lateral striatum. In rostral brain regions, high expression levels in the dorsal lateral striatum, while in the caudal brain regions, high levels are observed in the ventral lateral striatum. Expressed in neurons. In the hypothalamus, expressed in both GABAergic and glutamatergic presynaptic terminals of POMC neurons (at protein level). Expressed in striated muscles, including skeletal muscles (gastrocnemius and rectus abdominis) and myocardium (at protein level). Expressed in the liver, with highest levels in Kupffer cells and lower levels in endothelial cells as well as hepatocytes, particularly in perivascular areas (at protein level). The hepatic expression level is up-regulated in obese mice compared to lean animals.

Its subcellular location is the cell membrane. It localises to the mitochondrion outer membrane. It is found in the cell projection. The protein resides in the axon. The protein localises to the presynapse. Hemopressin, a peptide derived from hemoglobin subunit alpha (HBA1 and/or HBA2), acts as an antagonist peptide: hemopressin-binding efficiently blocks cannabinoid receptor CNR1 and subsequent signaling. In terms of biological role, G-protein coupled receptor for cannabinoids, including endocannabinoids (eCBs), such as N-arachidonoylethanolamide (also called anandamide or AEA) and 2-arachidonoylglycerol (2-AG). Mediates many cannabinoid-induced effects, acting, among others, on food intake, memory loss, gastrointestinal motility, catalepsy, ambulatory activity, anxiety, chronic pain. Signaling typically involves reduction in cyclic AMP. In the hypothalamus, may have a dual effect on mitochondrial respiration depending upon the agonist dose and possibly upon the cell type. Increases respiration at low doses, while decreases respiration at high doses. At high doses, CNR1 signal transduction involves G-protein alpha-i protein activation and subsequent inhibition of mitochondrial soluble adenylate cyclase, decrease in cyclic AMP concentration, inhibition of protein kinase A (PKA)-dependent phosphorylation of specific subunits of the mitochondrial electron transport system, including NDUFS2. In the hypothalamus, inhibits leptin-induced reactive oxygen species (ROS) formation and mediates cannabinoid-induced increase in SREBF1 and FASN gene expression. In response to cannabinoids, drives the release of orexigenic beta-endorphin, but not that of melanocyte-stimulating hormone alpha/alpha-MSH, from hypothalamic POMC neurons, hence promoting food intake. In the hippocampus, regulates cellular respiration and energy production in response to cannabinoids. Involved in cannabinoid-dependent depolarization-induced suppression of inhibition (DSI), a process in which depolarization of CA1 postsynaptic pyramidal neurons mobilizes eCBs, which retrogradely activate presynaptic CB1 receptors, transiently decreasing GABAergic inhibitory neurotransmission. Also reduces excitatory synaptic transmission. In superior cervical ganglions and cerebral vascular smooth muscle cells, inhibits voltage-gated Ca(2+) channels in a constitutive, as well as agonist-dependent manner. In cerebral vascular smooth muscle cells, cannabinoid-induced inhibition of voltage-gated Ca(2+) channels leads to vasodilation and decreased vascular tone. Induces leptin production in adipocytes and reduces LRP2-mediated leptin clearance in the kidney, hence participating in hyperleptinemia. In adipose tissue, CNR1 signaling leads to increased expression of SREBF1, ACACA and FASN genes. In the liver, activation by endocannabinoids leads to increased de novo lipogenesis and reduced fatty acid catabolism, associated with increased expression of SREBF1/SREBP-1, GCK, ACACA, ACACB and FASN genes. May also affect de novo cholesterol synthesis and HDL-cholesteryl ether uptake. Peripherally modulates energy metabolism. In high carbohydrate diet-induced obesity, may decrease the expression of mitochondrial dihydrolipoyl dehydrogenase/DLD in striated muscles, as well as that of selected glucose/ pyruvate metabolic enzymes, hence affecting energy expenditure through mitochondrial metabolism. In response to cannabinoid anandamide, elicits a pro-inflammatory response in macrophages, which involves NLRP3 inflammasome activation and IL1B and IL18 secretion. In macrophages infiltrating pancreatic islets, this process may participate in the progression of type-2 diabetes and associated loss of pancreatic beta-cells. The polypeptide is Cannabinoid receptor 1 (Cnr1) (Mus musculus (Mouse)).